Consider the following 478-residue polypeptide: Aspartyl/glutamyl-tRNA(Asn/Gln) amidotransferase subunit B 1 (478 aa).

It belongs to the GatB/GatE family. GatB subfamily. As to quaternary structure, heterotrimer of A, B and C subunits.

It catalyses the reaction L-glutamyl-tRNA(Gln) + L-glutamine + ATP + H2O = L-glutaminyl-tRNA(Gln) + L-glutamate + ADP + phosphate + H(+). The enzyme catalyses L-aspartyl-tRNA(Asn) + L-glutamine + ATP + H2O = L-asparaginyl-tRNA(Asn) + L-glutamate + ADP + phosphate + 2 H(+). Functionally, allows the formation of correctly charged Asn-tRNA(Asn) or Gln-tRNA(Gln) through the transamidation of misacylated Asp-tRNA(Asn) or Glu-tRNA(Gln) in organisms which lack either or both of asparaginyl-tRNA or glutaminyl-tRNA synthetases. The reaction takes place in the presence of glutamine and ATP through an activated phospho-Asp-tRNA(Asn) or phospho-Glu-tRNA(Gln). The chain is Aspartyl/glutamyl-tRNA(Asn/Gln) amidotransferase subunit B 1 from Syntrophus aciditrophicus (strain SB).